An 80-amino-acid polypeptide reads, in one-letter code: Large ribosomal subunit protein uL24 (80 aa).

The disordered stretch occupies residues 53–80; sequence HMKPTQSHPQGSIIEREFPIHASNVKKS.

The protein belongs to the universal ribosomal protein uL24 family. In terms of assembly, part of the 50S ribosomal subunit.

Its function is as follows. One of two assembly initiator proteins, it binds directly to the 5'-end of the 23S rRNA, where it nucleates assembly of the 50S subunit. Functionally, one of the proteins that surrounds the polypeptide exit tunnel on the outside of the subunit. In Chlorobium limicola (strain DSM 245 / NBRC 103803 / 6330), this protein is Large ribosomal subunit protein uL24.